The following is a 258-amino-acid chain: Small ribosomal subunit protein uS3 (258 aa).

The KH type-2 domain occupies 43 to 111 (IRKLMSTGLE…QVQLNILEVK (69 aa)). Positions 217 to 258 (AREQASAAPRARGRADRPRGRRDEGAAPQQAAAPAATTGTEA) are disordered. A compositionally biased stretch (basic and acidic residues) spans 229-241 (GRADRPRGRRDEG). Residues 242 to 258 (AAPQQAAAPAATTGTEA) are compositionally biased toward low complexity.

The protein belongs to the universal ribosomal protein uS3 family. Part of the 30S ribosomal subunit. Forms a tight complex with proteins S10 and S14.

In terms of biological role, binds the lower part of the 30S subunit head. Binds mRNA in the 70S ribosome, positioning it for translation. In Beutenbergia cavernae (strain ATCC BAA-8 / DSM 12333 / CCUG 43141 / JCM 11478 / NBRC 16432 / NCIMB 13614 / HKI 0122), this protein is Small ribosomal subunit protein uS3.